The primary structure comprises 616 residues: Chaperone protein DnaK (616 aa).

Phosphothreonine; by autocatalysis is present on Thr-175. The tract at residues 579–605 is disordered; it reads GGDPSQAGGFDPNAAGGAQQAPHDDNV.

The protein belongs to the heat shock protein 70 family.

In terms of biological role, acts as a chaperone. The chain is Chaperone protein DnaK from Clostridium botulinum (strain Alaska E43 / Type E3).